We begin with the raw amino-acid sequence, 198 residues long: DnaJ homolog subfamily C member 5 (198 aa).

Serine 8, serine 10, serine 12, and serine 15 each carry phosphoserine. The 70-residue stretch at 13–82 (GESLYHVLGL…RNIYDKYGSL (70 aa)) folds into the J domain. Tyrosine 17 carries the phosphotyrosine modification. Lysine 56 carries the N6-acetyllysine modification. Phosphoserine is present on serine 151.

Oligomers. Homodimer. Interacts with the chaperone complex consisting of HSC70 and SGTA. Interacts with ZDHHC13 (via ANK repeats). Interacts with ZDHHC17 (via ANK repeats). Interacts with SYT1, SYT5 and SYT7, and with SYT9, forming a complex with SNAP25. In terms of processing, ser-10 phosphorylation induces an order-to-disorder transition triggering the interaction with Lys-58. This conformational switch modulates DNAJC5's cellular functions by reducing binding to syntaxin and synaptogamin without altering HSC70 interactions. Post-translationally, palmitoylated. Could be palmitoylated by DHHC3, DHHC7, DHHC15 and DHHC17. Palmitoylation occurs probably in the cysteine-rich domain and regulates DNAJC5 membrane attachment. Expressed in pancreas, kidney, skeletal muscle, liver, lung, placenta, brain and heart.

Its subcellular location is the cytoplasm. The protein resides in the cytosol. It localises to the membrane. The protein localises to the cytoplasmic vesicle. It is found in the secretory vesicle. Its subcellular location is the chromaffin granule membrane. The protein resides in the melanosome. It localises to the cell membrane. Acts as a general chaperone in regulated exocytosis. Acts as a co-chaperone for the SNARE protein SNAP-25. Involved in the calcium-mediated control of a late stage of exocytosis. May have an important role in presynaptic function. May be involved in calcium-dependent neurotransmitter release at nerve endings. The sequence is that of DnaJ homolog subfamily C member 5 from Homo sapiens (Human).